The chain runs to 289 residues: MPELPEVETIRRTLAPVLIGALVIGALRGEHPEDILLDPWPVFARRVRRHRIVALERRGKYLAARFEDGDRLVIHLGMTGELRLSHPATAPGKHCHLALVLRSLRPLPPSLVDQRQRFLLRYLDIRRFGRIALLDQAGWETFTARLGPEPLDPTLDPRALWSRLRERRTAIKAALLDQALLAGIGNIYADEALFQARLHPARRCQTLSLDEVERLLVALRTVLSAAIENAGTTIRDYRDGQGRAGSFQSRLQVYGKPAGTPCPRCGTGLARIRIAGRSSVFCPRCQPLH.

Proline 2 acts as the Schiff-base intermediate with DNA in catalysis. Glutamate 3 functions as the Proton donor in the catalytic mechanism. Lysine 60 acts as the Proton donor; for beta-elimination activity in catalysis. DNA-binding residues include histidine 94, arginine 126, and arginine 167. The FPG-type zinc-finger motif lies at 252–287; it reads QVYGKPAGTPCPRCGTGLARIRIAGRSSVFCPRCQP. Catalysis depends on arginine 277, which acts as the Proton donor; for delta-elimination activity.

This sequence belongs to the FPG family. As to quaternary structure, monomer. Zn(2+) serves as cofactor.

It carries out the reaction Hydrolysis of DNA containing ring-opened 7-methylguanine residues, releasing 2,6-diamino-4-hydroxy-5-(N-methyl)formamidopyrimidine.. It catalyses the reaction 2'-deoxyribonucleotide-(2'-deoxyribose 5'-phosphate)-2'-deoxyribonucleotide-DNA = a 3'-end 2'-deoxyribonucleotide-(2,3-dehydro-2,3-deoxyribose 5'-phosphate)-DNA + a 5'-end 5'-phospho-2'-deoxyribonucleoside-DNA + H(+). Functionally, involved in base excision repair of DNA damaged by oxidation or by mutagenic agents. Acts as a DNA glycosylase that recognizes and removes damaged bases. Has a preference for oxidized purines, such as 7,8-dihydro-8-oxoguanine (8-oxoG). Has AP (apurinic/apyrimidinic) lyase activity and introduces nicks in the DNA strand. Cleaves the DNA backbone by beta-delta elimination to generate a single-strand break at the site of the removed base with both 3'- and 5'-phosphates. This chain is Formamidopyrimidine-DNA glycosylase, found in Thermomicrobium roseum (strain ATCC 27502 / DSM 5159 / P-2).